The sequence spans 132 residues: Fatty acid-binding protein, intestinal (132 aa).

N-acetylalanine is present on alanine 2. Positions 83 and 107 each coordinate hexadecanoate. Residues tryptophan 83 and arginine 107 each coordinate tetradecanoate.

Belongs to the calycin superfamily. Fatty-acid binding protein (FABP) family. Expressed in the small intestine. Expression in the mucosal cells of the ileum extends from the midvillar region to the villus tips.

The protein resides in the cytoplasm. In terms of biological role, FABPs are thought to play a role in the intracellular transport of long-chain fatty acids and their acyl-CoA esters. FABP2 is probably involved in triglyceride-rich lipoprotein synthesis. Binds saturated long-chain fatty acids with a high affinity, but binds with a lower affinity to unsaturated long-chain fatty acids. FABP2 may also help maintain energy homeostasis by functioning as a lipid sensor. In Rattus norvegicus (Rat), this protein is Fatty acid-binding protein, intestinal (Fabp2).